Consider the following 147-residue polypeptide: D-aminoacyl-tRNA deacylase (147 aa).

Residues 137–138 (GP) carry the Gly-cisPro motif, important for rejection of L-amino acids motif.

Belongs to the DTD family. In terms of assembly, homodimer.

It is found in the cytoplasm. It carries out the reaction glycyl-tRNA(Ala) + H2O = tRNA(Ala) + glycine + H(+). The enzyme catalyses a D-aminoacyl-tRNA + H2O = a tRNA + a D-alpha-amino acid + H(+). In terms of biological role, an aminoacyl-tRNA editing enzyme that deacylates mischarged D-aminoacyl-tRNAs. Also deacylates mischarged glycyl-tRNA(Ala), protecting cells against glycine mischarging by AlaRS. Acts via tRNA-based rather than protein-based catalysis; rejects L-amino acids rather than detecting D-amino acids in the active site. By recycling D-aminoacyl-tRNA to D-amino acids and free tRNA molecules, this enzyme counteracts the toxicity associated with the formation of D-aminoacyl-tRNA entities in vivo and helps enforce protein L-homochirality. The chain is D-aminoacyl-tRNA deacylase from Acinetobacter baumannii (strain ATCC 17978 / DSM 105126 / CIP 53.77 / LMG 1025 / NCDC KC755 / 5377).